The sequence spans 382 residues: Dual-specificity RNA methyltransferase RlmN (382 aa).

The active-site Proton acceptor is the Glu-91. The Radical SAM core domain maps to 97 to 339; that stretch reads ETDRGTLCIS…TTVRKTRGDD (243 aa). A disulfide bond links Cys-104 and Cys-344. The [4Fe-4S] cluster site is built by Cys-111, Cys-115, and Cys-118. Residues 165-166, Ser-197, 219-221, and Asn-301 contribute to the S-adenosyl-L-methionine site; these read GE and SLH. Cys-344 (S-methylcysteine intermediate) is an active-site residue.

This sequence belongs to the radical SAM superfamily. RlmN family. [4Fe-4S] cluster serves as cofactor.

It is found in the cytoplasm. It catalyses the reaction adenosine(2503) in 23S rRNA + 2 reduced [2Fe-2S]-[ferredoxin] + 2 S-adenosyl-L-methionine = 2-methyladenosine(2503) in 23S rRNA + 5'-deoxyadenosine + L-methionine + 2 oxidized [2Fe-2S]-[ferredoxin] + S-adenosyl-L-homocysteine. The catalysed reaction is adenosine(37) in tRNA + 2 reduced [2Fe-2S]-[ferredoxin] + 2 S-adenosyl-L-methionine = 2-methyladenosine(37) in tRNA + 5'-deoxyadenosine + L-methionine + 2 oxidized [2Fe-2S]-[ferredoxin] + S-adenosyl-L-homocysteine. Functionally, specifically methylates position 2 of adenine 2503 in 23S rRNA and position 2 of adenine 37 in tRNAs. m2A2503 modification seems to play a crucial role in the proofreading step occurring at the peptidyl transferase center and thus would serve to optimize ribosomal fidelity. In Polaromonas naphthalenivorans (strain CJ2), this protein is Dual-specificity RNA methyltransferase RlmN.